A 434-amino-acid chain; its full sequence is V-type ATP synthase beta chain (434 aa).

Belongs to the ATPase alpha/beta chains family.

Its function is as follows. Produces ATP from ADP in the presence of a proton gradient across the membrane. The V-type beta chain is a regulatory subunit. This chain is V-type ATP synthase beta chain, found in Borreliella afzelii (strain PKo) (Borrelia afzelii).